Consider the following 958-residue polypeptide: Glycine dehydrogenase (decarboxylating) (958 aa).

At lysine 703 the chain carries N6-(pyridoxal phosphate)lysine.

It belongs to the GcvP family. In terms of assembly, the glycine cleavage system is composed of four proteins: P, T, L and H. Requires pyridoxal 5'-phosphate as cofactor.

The enzyme catalyses N(6)-[(R)-lipoyl]-L-lysyl-[glycine-cleavage complex H protein] + glycine + H(+) = N(6)-[(R)-S(8)-aminomethyldihydrolipoyl]-L-lysyl-[glycine-cleavage complex H protein] + CO2. In terms of biological role, the glycine cleavage system catalyzes the degradation of glycine. The P protein binds the alpha-amino group of glycine through its pyridoxal phosphate cofactor; CO(2) is released and the remaining methylamine moiety is then transferred to the lipoamide cofactor of the H protein. The sequence is that of Glycine dehydrogenase (decarboxylating) from Nitrobacter hamburgensis (strain DSM 10229 / NCIMB 13809 / X14).